Consider the following 133-residue polypeptide: ATP synthase epsilon chain (133 aa).

It belongs to the ATPase epsilon chain family. In terms of assembly, F-type ATPases have 2 components, CF(1) - the catalytic core - and CF(0) - the membrane proton channel. CF(1) has five subunits: alpha(3), beta(3), gamma(1), delta(1), epsilon(1). CF(0) has three main subunits: a, b and c.

Its subcellular location is the cell membrane. Produces ATP from ADP in the presence of a proton gradient across the membrane. This chain is ATP synthase epsilon chain, found in Bacillus cereus (strain ATCC 14579 / DSM 31 / CCUG 7414 / JCM 2152 / NBRC 15305 / NCIMB 9373 / NCTC 2599 / NRRL B-3711).